The following is a 24-amino-acid chain: FQPSLVLDMAQVLLDNYTFPENLM.

Its subcellular location is the secreted. It localises to the extracellular space. It is found in the extracellular matrix. The protein localises to the interphotoreceptor matrix. IRBP shuttles 11-cis and all trans retinoids between the retinol isomerase in the pigment epithelium and the visual pigments in the photoreceptor cells of the retina. The chain is Retinol-binding protein 3 (RBP3) from Ovis aries (Sheep).